We begin with the raw amino-acid sequence, 65 residues long: Large ribosomal subunit protein bL35 (65 aa).

The span at 1 to 16 (MPKMKTKSGAKKRFRV) shows a compositional bias: basic residues. Residues 1–25 (MPKMKTKSGAKKRFRVRPGGTVKRG) form a disordered region.

The protein belongs to the bacterial ribosomal protein bL35 family.

The sequence is that of Large ribosomal subunit protein bL35 from Herminiimonas arsenicoxydans.